A 200-amino-acid chain; its full sequence is GTP-dependent dephospho-CoA kinase (200 aa).

5 residues coordinate GTP: D56, V57, V58, D75, and E132.

Belongs to the GTP-dependent DPCK family.

It catalyses the reaction 3'-dephospho-CoA + GTP = GDP + CoA + H(+). Its pathway is cofactor biosynthesis; coenzyme A biosynthesis. Catalyzes the GTP-dependent phosphorylation of the 3'-hydroxyl group of dephosphocoenzyme A to form coenzyme A (CoA). The sequence is that of GTP-dependent dephospho-CoA kinase from Caldivirga maquilingensis (strain ATCC 700844 / DSM 13496 / JCM 10307 / IC-167).